Reading from the N-terminus, the 201-residue chain is FMN-dependent NADH:quinone oxidoreductase (201 aa).

Residues Ser10, 16-18 (SQS), 96-99 (MYNF), and 140-143 (SRGG) contribute to the FMN site.

This sequence belongs to the azoreductase type 1 family. As to quaternary structure, homodimer. It depends on FMN as a cofactor.

It carries out the reaction 2 a quinone + NADH + H(+) = 2 a 1,4-benzosemiquinone + NAD(+). The catalysed reaction is N,N-dimethyl-1,4-phenylenediamine + anthranilate + 2 NAD(+) = 2-(4-dimethylaminophenyl)diazenylbenzoate + 2 NADH + 2 H(+). Functionally, quinone reductase that provides resistance to thiol-specific stress caused by electrophilic quinones. In terms of biological role, also exhibits azoreductase activity. Catalyzes the reductive cleavage of the azo bond in aromatic azo compounds to the corresponding amines. In Shigella flexneri serotype 5b (strain 8401), this protein is FMN-dependent NADH:quinone oxidoreductase.